The following is a 428-amino-acid chain: 3-phosphoshikimate 1-carboxyvinyltransferase (428 aa).

3 residues coordinate 3-phosphoshikimate: Lys22, Ser23, and Arg27. Phosphoenolpyruvate is bound at residue Lys22. Residues Gly94 and Arg122 each coordinate phosphoenolpyruvate. Residues Ser169, Ser170, Gln171, Ser197, Asp315, and Lys342 each contribute to the 3-phosphoshikimate site. Gln171 serves as a coordination point for phosphoenolpyruvate. The active-site Proton acceptor is Asp315. The phosphoenolpyruvate site is built by Arg346, Arg389, and Lys414.

The protein belongs to the EPSP synthase family. Monomer.

The protein localises to the cytoplasm. It carries out the reaction 3-phosphoshikimate + phosphoenolpyruvate = 5-O-(1-carboxyvinyl)-3-phosphoshikimate + phosphate. It participates in metabolic intermediate biosynthesis; chorismate biosynthesis; chorismate from D-erythrose 4-phosphate and phosphoenolpyruvate: step 6/7. Catalyzes the transfer of the enolpyruvyl moiety of phosphoenolpyruvate (PEP) to the 5-hydroxyl of shikimate-3-phosphate (S3P) to produce enolpyruvyl shikimate-3-phosphate and inorganic phosphate. In Cellvibrio japonicus (strain Ueda107) (Pseudomonas fluorescens subsp. cellulosa), this protein is 3-phosphoshikimate 1-carboxyvinyltransferase.